The primary structure comprises 435 residues: Fez family zinc finger protein 2 (435 aa).

An Engrailed homology 1 repressor motif is present at residues 27-42; it reads SLAFSIERIMAKTSEP. C2H2-type zinc fingers lie at residues 254 to 276, 282 to 304, 310 to 332, 338 to 360, 366 to 388, and 394 to 417; these read FTCE…MPVH, FVCK…KIIH, HKCN…IRIH, FVCE…KLTH, YKCT…MHTH, and FTCG…RKLH.

This sequence belongs to the krueppel C2H2-type zinc-finger protein family.

It localises to the nucleus. Its function is as follows. Transcription repressor. Component of the regulatory cascade that controls the development of dopaminergic (DA) and serotonergic (5HT) neurons. The sequence is that of Fez family zinc finger protein 2 (fezf2) from Xenopus tropicalis (Western clawed frog).